The chain runs to 517 residues: Xylosidase/arabinosidase (517 aa).

Asp-15 functions as the Proton acceptor in the catalytic mechanism. Glu-185 functions as the Proton donor in the catalytic mechanism.

This sequence belongs to the glycosyl hydrolase 43 family.

It catalyses the reaction Hydrolysis of (1-&gt;4)-beta-D-xylans, to remove successive D-xylose residues from the non-reducing termini.. The catalysed reaction is Hydrolysis of terminal non-reducing alpha-L-arabinofuranoside residues in alpha-L-arabinosides.. In terms of biological role, has a 1.6-fold higher activity as an arabinosidase than as a beta-xylosidase when tested on the substrates nitrophenyl-beta-D-xylopyranoside and P-nitrophenyl-alpha-L-arabinofuranoside. The protein is Xylosidase/arabinosidase (xylB) of Butyrivibrio fibrisolvens.